The following is a 984-amino-acid chain: Respiratory nitrate reductase subunit alpha (984 aa).

Residues 1–43 (MSRNDASQLDDGETTAESPPDDQANDAPEVGDPPGDPVDADSG) are disordered. Acidic residues predominate over residues 8 to 24 (QLDDGETTAESPPDDQA). Residues 103–167 (DSVSRSTHSV…CYTDYVNADQ (65 aa)) form the 4Fe-4S Mo/W bis-MGD-type domain. Positions 110, 114, 118, and 153 each coordinate [4Fe-4S] cluster. Asp-249 is a Mo-bis(molybdopterin guanine dinucleotide) binding site.

The protein belongs to the prokaryotic molybdopterin-containing oxidoreductase family. In terms of assembly, probable multiprotein complex; a catalytic heterodimer of an alpha and beta chain is proposed to associate with additional subunits involved in membrane attachment and electron transfer. Requires [4Fe-4S] cluster as cofactor. It depends on Mo-bis(molybdopterin guanine dinucleotide) as a cofactor. Exported by the Tat system.

It is found in the cell membrane. It catalyses the reaction nitrate + a quinol = a quinone + nitrite + H2O. With respect to regulation, inhibited by cyanide, azide and antimycin A. Enzyme stability is not dependent on salt concentration. Its function is as follows. The respiratory membrane-bound nitrate reductase enzyme complex plays a role in generation of metabolic energy by using nitrate as a terminal electron acceptor during anaerobic conditions. The alpha chain is the actual site of nitrate reduction. This Haloferax mediterranei (strain ATCC 33500 / DSM 1411 / JCM 8866 / NBRC 14739 / NCIMB 2177 / R-4) (Halobacterium mediterranei) protein is Respiratory nitrate reductase subunit alpha (narG).